An 818-amino-acid polypeptide reads, in one-letter code: MAGTRRKSLQNRQVGSLLIFLCISVGDATTIRYSVAEEMESGSFVANVAKDLGLEVGKLAARGARLVSEGNKMHFRLHRKTGDLFVKEKLDRESLCGKADPCVLHFEVVLVEPLQSFRAEVRVFDINDNAPVFLNKEPLLKIPESTPLGSRFPLQSAQDLDVGLNGLQNYTLSANGYFHLHTRFCSHGPKYAELVLNKPLDREEQPEVNLTITAVDGGSPPKSGTAHIHVVVLDVNDHVPQFSRLVYRAQVSENSPNGSLVATVTAVDLDEGTNKAITYSLAQNPEAILKTFQIDPQNGEVRLRGPLDFEAIETYDIDIQATDGGGLSAHSKVLVEVVDVNDNPPEVMVSSVSSPLPEDSPPQTVVALFTIRDRDIRVGGKVTCFLREDLPFVIKPTFGNSYSLVTDRSLDREEVSGYNITIVAMDTGPPSLSAETMIEVLISDVNDNPPIFREDSYILTVRENNSPAVFIGKVHAEDLDLGENAQITYSLLPPKNGDLSVFAYISINSGNGKLYALRTMDYEAIQDFQFVVKATDGGFLSLSSQVTVRVVVLDDNDNRPMILYPLQNGTLPCNDLVPRSAEAGYLVTKVVAVDGDSGQNSWLSYHLLKATDLGLFSVQRQNGEIHTLRQISERDPMMQKLIILVQDHGQPALSTTVSLNILLVDGFSEPYLQFQDPTKHSRKVNPSTKYLVISLVILSFLFLLSVIVIFIIHVYQKIKYREKFTIQEHFYDDCNFSNNLVQGQGNGSLSRPCPYEMCSATGTGNSEFRFLKRFMPNFPFPHATGEIKMEAGSSLPPNSDRNKSQRLEGHDQVSDDYM.

The first 28 residues, 1–28 (MAGTRRKSLQNRQVGSLLIFLCISVGDA), serve as a signal peptide directing secretion. The Extracellular segment spans residues 29-691 (TTIRYSVAEE…RKVNPSTKYL (663 aa)). 5 Cadherin domains span residues 35 to 133 (VAEE…APVF), 138 to 242 (PLLK…VPQF), 243 to 347 (SRLV…PPEV), 348 to 452 (MVSS…PPIF), and 457 to 562 (YILT…RPMI). 4 N-linked (GlcNAc...) asparagine glycosylation sites follow: N169, N209, N257, and N419. A glycan (N-linked (GlcNAc...) asparagine) is linked at N568. A Cadherin 6 domain is found at 577–672 (VPRSAEAGYL…LVDGFSEPYL (96 aa)). A helical transmembrane segment spans residues 692–712 (VISLVILSFLFLLSVIVIFII). At 713–818 (HVYQKIKYRE…GHDQVSDDYM (106 aa)) the chain is on the cytoplasmic side. The tract at residues 789 to 818 (MEAGSSLPPNSDRNKSQRLEGHDQVSDDYM) is disordered. A compositionally biased stretch (basic and acidic residues) spans 800–818 (DRNKSQRLEGHDQVSDDYM).

The protein localises to the cell membrane. Functionally, potential calcium-dependent cell-adhesion protein. May be involved in the establishment and maintenance of specific neuronal connections in the brain. This chain is Protocadherin beta-1 (PCDHB1), found in Homo sapiens (Human).